Reading from the N-terminus, the 337-residue chain is MRLTASAIAGQFGLTVLGDGSTEVSGVATLAHAGAGQLSFLSNPRYRPQLADSQAAVVVLRADDAEAAKGTALVAKDPYTAFAKIAALFDVAPVCEPGIHPSAVIDPTAQVSPGAHVGPFVSIGARSRVGDGCVIGTGSLIGADCVVDDGSELLARVTLVTRVRLGKRVRIHPGAVIGADGFGLAMDAGHWIKVPQLGGVVIGDDCEIGANTCIDRGALEDTVLEEDVRVDNLVQIAHNCRIGAHSAIAGCSGIAGSAKIGRYCLLGGHVGVVGHLEICDKVVITGKSVVRNSIHEPGEYSSGTPLTDNRTWRKNAARFKQLDVLARRILAVGKEKE.

H238 (proton acceptor) is an active-site residue.

This sequence belongs to the transferase hexapeptide repeat family. LpxD subfamily. In terms of assembly, homotrimer.

The enzyme catalyses a UDP-3-O-[(3R)-3-hydroxyacyl]-alpha-D-glucosamine + a (3R)-hydroxyacyl-[ACP] = a UDP-2-N,3-O-bis[(3R)-3-hydroxyacyl]-alpha-D-glucosamine + holo-[ACP] + H(+). It functions in the pathway bacterial outer membrane biogenesis; LPS lipid A biosynthesis. In terms of biological role, catalyzes the N-acylation of UDP-3-O-acylglucosamine using 3-hydroxyacyl-ACP as the acyl donor. Is involved in the biosynthesis of lipid A, a phosphorylated glycolipid that anchors the lipopolysaccharide to the outer membrane of the cell. This chain is UDP-3-O-acylglucosamine N-acyltransferase, found in Xanthomonas oryzae pv. oryzae (strain KACC10331 / KXO85).